A 678-amino-acid polypeptide reads, in one-letter code: Protein hook (678 aa).

The segment at 1–155 is interaction with microtubules; sequence MSTQNGMYYS…NIMRALQELE (155 aa). The Calponin-homology (CH) domain maps to 5-123; the sequence is NGMYYSLLEW…RLLQLVLGCA (119 aa). Coiled-coil stretches lie at residues 135–435 and 479–589; these read EIMC…LKCG and QTAL…AKEV.

Belongs to the hook family. As to quaternary structure, homodimer. Interacts with microtubules via its N-terminus.

Its subcellular location is the cytoplasm. The protein localises to the cytoskeleton. It is found in the endosome. It localises to the synapse. Involved in endocytic trafficking by stabilizing organelles of the endocytic pathway. Probably acts as a cytoskeletal linker protein required to tether endosome vesicles to the cytoskeleton. Involved in modulation of endocytosis at stages required for down-regulation of membrane proteins that control synapse size. Not involved in synaptic vesicle recycling. Required in R7 cells for boss endocytosis into multivesicular bodies (MVBs). Has a role in regulating adult longevity. This chain is Protein hook, found in Drosophila virilis (Fruit fly).